Here is a 176-residue protein sequence, read N- to C-terminus: Ribosome rescue factor SmrB (176 aa).

The 76-residue stretch at 93 to 168 (LDLHGYRQSE…GDAALLVLID (76 aa)) folds into the Smr domain.

Belongs to the SmrB family. In terms of assembly, associates with collided ribosomes, but not with correctly translating polysomes.

In terms of biological role, acts as a ribosome collision sensor. Detects stalled/collided disomes (pairs of ribosomes where the leading ribosome is stalled and a second ribosome has collided with it) and endonucleolytically cleaves mRNA at the 5' boundary of the stalled ribosome. Stalled/collided disomes form a new interface (primarily via the 30S subunits) that binds SmrB. Cleaved mRNA becomes available for tmRNA ligation, leading to ribosomal subunit dissociation and rescue of stalled ribosomes. The protein is Ribosome rescue factor SmrB of Shewanella oneidensis (strain ATCC 700550 / JCM 31522 / CIP 106686 / LMG 19005 / NCIMB 14063 / MR-1).